The following is a 307-amino-acid chain: Coproporphyrin III ferrochelatase (307 aa).

Residues Tyr12, Arg29, 45-46 (RY), Ser53, and Tyr124 contribute to the Fe-coproporphyrin III site. Fe(2+)-binding residues include His181 and Glu263.

This sequence belongs to the ferrochelatase family.

It localises to the cytoplasm. The catalysed reaction is Fe-coproporphyrin III + 2 H(+) = coproporphyrin III + Fe(2+). It functions in the pathway porphyrin-containing compound metabolism; protoheme biosynthesis. Its function is as follows. Involved in coproporphyrin-dependent heme b biosynthesis. Catalyzes the insertion of ferrous iron into coproporphyrin III to form Fe-coproporphyrin III. The polypeptide is Coproporphyrin III ferrochelatase (Staphylococcus aureus (strain MRSA252)).